A 112-amino-acid polypeptide reads, in one-letter code: Large ribosomal subunit protein uL22 (112 aa).

It belongs to the universal ribosomal protein uL22 family. In terms of assembly, part of the 50S ribosomal subunit.

In terms of biological role, this protein binds specifically to 23S rRNA; its binding is stimulated by other ribosomal proteins, e.g. L4, L17, and L20. It is important during the early stages of 50S assembly. It makes multiple contacts with different domains of the 23S rRNA in the assembled 50S subunit and ribosome. Functionally, the globular domain of the protein is located near the polypeptide exit tunnel on the outside of the subunit, while an extended beta-hairpin is found that lines the wall of the exit tunnel in the center of the 70S ribosome. The chain is Large ribosomal subunit protein uL22 from Akkermansia muciniphila (strain ATCC BAA-835 / DSM 22959 / JCM 33894 / BCRC 81048 / CCUG 64013 / CIP 107961 / Muc).